A 402-amino-acid polypeptide reads, in one-letter code: Candidapepsin-1 (402 aa).

The or 18, or 21 signal peptide spans 1–25; that stretch reads MVAIVTLTRQVLLTIALALFAQGAA. Residues 26 to 62 constitute a propeptide, activation peptide; the sequence is IPEEAAKRDDNPGFVALDFDVLRKPLNLTEALLREKR. Asn-52 carries an N-linked (GlcNAc...) asparagine glycan. The 314-residue stretch at 76-389 folds into the Peptidase A1 domain; the sequence is YASKVSVGSN…NLDANTISIA (314 aa). The active site involves Asp-94. The cysteines at positions 109 and 115 are disulfide-linked. The active site involves Asp-282. A disulfide bridge links Cys-320 with Cys-354.

Belongs to the peptidase A1 family. Post-translationally, O-glycosylated.

Its subcellular location is the secreted. The enzyme catalyses Preferential cleavage at the carboxyl of hydrophobic amino acids, but fails to cleave 15-Leu-|-Tyr-16, 16-Tyr-|-Leu-17 and 24-Phe-|-Phe-25 of insulin B chain. Activates trypsinogen, and degrades keratin.. This is Candidapepsin-1 (SAPP1) from Candida parapsilosis (Yeast).